We begin with the raw amino-acid sequence, 442 residues long: ATP-dependent protease ATPase subunit HslU (442 aa).

ATP contacts are provided by residues Ile18, 60 to 65, Asp255, Glu320, and Arg392; that span reads GVGKTE.

Belongs to the ClpX chaperone family. HslU subfamily. A double ring-shaped homohexamer of HslV is capped on each side by a ring-shaped HslU homohexamer. The assembly of the HslU/HslV complex is dependent on binding of ATP.

The protein localises to the cytoplasm. Functionally, ATPase subunit of a proteasome-like degradation complex; this subunit has chaperone activity. The binding of ATP and its subsequent hydrolysis by HslU are essential for unfolding of protein substrates subsequently hydrolyzed by HslV. HslU recognizes the N-terminal part of its protein substrates and unfolds these before they are guided to HslV for hydrolysis. The chain is ATP-dependent protease ATPase subunit HslU from Aeromonas salmonicida (strain A449).